The following is a 184-amino-acid chain: Cytidylate kinase (184 aa).

8–16 is an ATP binding site; sequence GQPGSGKTT.

This sequence belongs to the cytidylate kinase family. Type 2 subfamily.

The protein localises to the cytoplasm. It catalyses the reaction CMP + ATP = CDP + ADP. The enzyme catalyses dCMP + ATP = dCDP + ADP. In Pyrobaculum neutrophilum (strain DSM 2338 / JCM 9278 / NBRC 100436 / V24Sta) (Thermoproteus neutrophilus), this protein is Cytidylate kinase.